A 140-amino-acid chain; its full sequence is Ribosome maturation factor RimP (140 aa).

Belongs to the RimP family.

Its subcellular location is the cytoplasm. In terms of biological role, required for maturation of 30S ribosomal subunits. In Campylobacter jejuni subsp. doylei (strain ATCC BAA-1458 / RM4099 / 269.97), this protein is Ribosome maturation factor RimP.